Here is a 754-residue protein sequence, read N- to C-terminus: Subtilisin-like protease SBT3.12 (754 aa).

Residues 1-28 (MGIVKGRSRAGLFIGFLFIVNVGFCVFA) form the signal peptide. Residues 29–117 (QESSNEERKI…VAPNRKVELQ (89 aa)) constitute a propeptide, activation peptide. The Inhibitor I9 domain maps to 39–116 (YVVHLGVRRH…SVAPNRKVEL (78 aa)). The Peptidase S8 domain maps to 121-606 (IYDYLGLSPS…AGLVNAERAK (486 aa)). Asp-151 acts as the Charge relay system in catalysis. An N-linked (GlcNAc...) asparagine glycan is attached at Asn-206. Catalysis depends on His-224, which acts as the Charge relay system. Residues Asn-239 and Asn-369 are each glycosylated (N-linked (GlcNAc...) asparagine). Catalysis depends on Ser-537, which acts as the Charge relay system. Residues Asn-629 and Asn-740 are each glycosylated (N-linked (GlcNAc...) asparagine).

It belongs to the peptidase S8 family.

The protein localises to the secreted. The protein is Subtilisin-like protease SBT3.12 of Arabidopsis thaliana (Mouse-ear cress).